We begin with the raw amino-acid sequence, 219 residues long: MDFLFGSRSSKTFKPKKNIPEGTHQYDLMKHAAATLGSGNLRNAVALPDGEDLNEWVAVNTVDFFNQINMLYGTITEFCTEETCGIMSAGPKYEYHWADGLTVKKPIKCSAPKYIDYLMTWVQDQLDDETLFPSKIGVPFPKNFHSSAKTILKRLFRVYAHIYHQHFTEVVTLGEEAHLNTSFKHFIFFVQEFNLIERRELAPLQELIDKLTAKDERQI.

Zn(2+) contacts are provided by Cys79, Cys84, His161, and His166.

Belongs to the MOB1/phocein family. In terms of assembly, interacts with and activates trc and wts. Phosphorylated by wts/mats kinase complex. Activated by phosphorylation by Hippo (Hpo) kinase which increases its affinity and its ability to activate Warts (Wts) kinase. Ubiquitously expressed at low levels in developing tissues (at protein level).

It is found in the cytoplasm. It localises to the cytoskeleton. The protein localises to the microtubule organizing center. Its subcellular location is the centrosome. The protein resides in the nucleus. It is found in the cytosol. It localises to the cell membrane. Its function is as follows. Coactivator of Warts (Wts) kinase in the Hippo/SWH (Sav/Wts/Hpo)signaling pathway, a signaling pathway that plays a pivotal role in organ size control and tumor suppression by restricting proliferation and promoting apoptosis. The core of this pathway is composed of a kinase cascade wherein Hippo (Hpo), in complex with its regulatory protein Salvador (Sav), phosphorylates and activates Warts (Wts) in complex with its regulatory protein Mats, which in turn phosphorylates and inactivates the Yorkie (Yki)oncoprotein. The Hippo/SWH signaling pathway inhibits the activity of the transcriptional complex formed by Scalloped (sd) and Yki and the target genes of this pathway include cyclin-E (cycE), diap1 and bantam. Mats is essential for early development and is required for proper chromosomal segregation in developing embryos. The protein is MOB kinase activator-like 1 of Drosophila melanogaster (Fruit fly).